The primary structure comprises 189 residues: MFGKKQVLASVLLIPLLMTGCGVADQGEGRRDNNDVRNVNYRNPANDDMRNVNNRDNVDNNVNDNVNNNRVNDDNNNDRKLEVADEAADKVTDLKEVKHADIIVAGNQAYVAVVLTNGNKGAVENNLKKKIAKKVRSTDKNIDNVYVSANPDFVERMQGYGKRIQNGDPIAGLFDEFTQTVQRVFPNAE.

A signal peptide spans 1 to 20 (MFGKKQVLASVLLIPLLMTG). A lipid anchor (N-palmitoyl cysteine) is attached at Cys-21. Cys-21 carries the S-diacylglycerol cysteine lipid modification. The tract at residues 24–79 (ADQGEGRRDNNDVRNVNYRNPANDDMRNVNNRDNVDNNVNDNVNNNRVNDDNNNDR) is disordered. The span at 51 to 70 (NVNNRDNVDNNVNDNVNNNR) shows a compositional bias: low complexity.

Its subcellular location is the forespore inner membrane. Probably contributes, directly or indirectly, to early events in germination. May play a role in spore outgrowth. This is Probable spore germination lipoprotein YhcN (yhcN) from Bacillus subtilis (strain 168).